A 78-amino-acid polypeptide reads, in one-letter code: Large ribosomal subunit protein bL28 (78 aa).

Belongs to the bacterial ribosomal protein bL28 family.

In Klebsiella pneumoniae (strain 342), this protein is Large ribosomal subunit protein bL28.